Here is a 296-residue protein sequence, read N- to C-terminus: MMEDKIIHTPRFDEQRRMRRKKRQRLQLFIFLSIVAIVSLILIYMFTSISYVKKISVNDTSINSTKTIKEKSGIQSNMRIYSLDTKQIVSNIEYLDGVKSVTVRRHFPNTVSINVEEYDVLGVVKDGEHYHPALENGQILHKHNYAEPSEVPLINNFSSKALNQLVKVLRASDTAIINQISEINFIPKVEASHRVQFYMKNGLEVIGDMRTIDNKLNYFPAMASKLKKDSNGRILKPGIIDLEIGAVFIPYESKQAEERRIELEAAMEERSEKDKAELEKSVEKLKKELNQVKKNS.

Over 1 to 25 the chain is Cytoplasmic; sequence MMEDKIIHTPRFDEQRRMRRKKRQR. A helical transmembrane segment spans residues 26 to 46; the sequence is LQLFIFLSIVAIVSLILIYMF. Residues 47 to 296 lie on the Extracellular side of the membrane; sequence TSISYVKKIS…KELNQVKKNS (250 aa). The 69-residue stretch at 50–118 folds into the POTRA domain; that stretch reads SYVKKISVND…NTVSINVEEY (69 aa).

This sequence belongs to the FtsQ/DivIB family. DivIB subfamily.

It is found in the cell membrane. Cell division protein that may be involved in stabilizing or promoting the assembly of the division complex. The protein is Cell division protein DivIB of Macrococcus caseolyticus (strain JCSC5402) (Macrococcoides caseolyticum).